Consider the following 339-residue polypeptide: MLPDLSAAPMQDRYGRPLRDLRLSVIEACNFRCGYCMPADRVPDDYGLDADQRLSFDQLETLVRAFVAVGVTKLRLTGGEPLLRKNLPVLIQRLAAIEGIEDLALTTNGALLARQAVALRQAGLRRITVSMDALEPALFRQMSGGRGEIDQVLAGIAAAEQAGFKRLKINCVVQRDVNEDQVLPLVEHFRGTGHVLRFIEFMDVGSCNGWRPEAVVTSAQLRDRIHARWPLAPLDANYTGEVAQRHAFADGLGEVGFVSSVSVPFCGDCQRARVSADGHLYTCLFASQGHDLKPALAEGEQGLATHLRQRWSVRADRYSEVRASTSRRRKPVEMFLIGG.

In terms of domain architecture, Radical SAM core spans 13–249 (RYGRPLRDLR…GEVAQRHAFA (237 aa)). R22 lines the GTP pocket. 2 residues coordinate [4Fe-4S] cluster: C29 and C33. Residue Y35 coordinates S-adenosyl-L-methionine. C36 provides a ligand contact to [4Fe-4S] cluster. Position 75 (R75) interacts with GTP. S-adenosyl-L-methionine is bound at residue G79. T106 contacts GTP. S130 serves as a coordination point for S-adenosyl-L-methionine. Residue K168 participates in GTP binding. M202 contacts S-adenosyl-L-methionine. Positions 266 and 269 each coordinate [4Fe-4S] cluster. Residue 271–273 (RAR) participates in GTP binding. Position 283 (C283) interacts with [4Fe-4S] cluster.

Belongs to the radical SAM superfamily. MoaA family. As to quaternary structure, monomer and homodimer. It depends on [4Fe-4S] cluster as a cofactor.

The catalysed reaction is GTP + AH2 + S-adenosyl-L-methionine = (8S)-3',8-cyclo-7,8-dihydroguanosine 5'-triphosphate + 5'-deoxyadenosine + L-methionine + A + H(+). It functions in the pathway cofactor biosynthesis; molybdopterin biosynthesis. Its function is as follows. Catalyzes the cyclization of GTP to (8S)-3',8-cyclo-7,8-dihydroguanosine 5'-triphosphate. The polypeptide is GTP 3',8-cyclase (Xanthomonas campestris pv. campestris (strain 8004)).